The primary structure comprises 317 residues: ATP synthase gamma chain (317 aa).

Belongs to the ATPase gamma chain family. In terms of assembly, F-type ATPases have 2 components, CF(1) - the catalytic core - and CF(0) - the membrane proton channel. CF(1) has five subunits: alpha(3), beta(3), gamma(1), delta(1), epsilon(1). CF(0) has three main subunits: a, b and c.

It localises to the cellular thylakoid membrane. Produces ATP from ADP in the presence of a proton gradient across the membrane. The gamma chain is believed to be important in regulating ATPase activity and the flow of protons through the CF(0) complex. The sequence is that of ATP synthase gamma chain from Synechococcus sp. (strain CC9902).